The primary structure comprises 71 residues: UPF0352 protein Asuc_0778 (71 aa).

This sequence belongs to the UPF0352 family.

The protein is UPF0352 protein Asuc_0778 of Actinobacillus succinogenes (strain ATCC 55618 / DSM 22257 / CCUG 43843 / 130Z).